We begin with the raw amino-acid sequence, 117 residues long: Nascent polypeptide-associated complex protein (117 aa).

One can recognise an NAC-A/B domain in the interval 9 to 77 (PKQLKQMQRA…ARECDLEAEV (69 aa)).

This sequence belongs to the NAC-alpha family. Homodimer. Interacts with the ribosome. Binds ribosomal RNA.

Functionally, contacts the emerging nascent chain on the ribosome. In Methanothermobacter marburgensis (strain ATCC BAA-927 / DSM 2133 / JCM 14651 / NBRC 100331 / OCM 82 / Marburg) (Methanobacterium thermoautotrophicum), this protein is Nascent polypeptide-associated complex protein.